Consider the following 89-residue polypeptide: Small ribosomal subunit protein uS15 (89 aa).

This sequence belongs to the universal ribosomal protein uS15 family. Part of the 30S ribosomal subunit. Forms a bridge to the 50S subunit in the 70S ribosome, contacting the 23S rRNA.

Functionally, one of the primary rRNA binding proteins, it binds directly to 16S rRNA where it helps nucleate assembly of the platform of the 30S subunit by binding and bridging several RNA helices of the 16S rRNA. Forms an intersubunit bridge (bridge B4) with the 23S rRNA of the 50S subunit in the ribosome. This Hyphomonas neptunium (strain ATCC 15444) protein is Small ribosomal subunit protein uS15.